The following is a 480-amino-acid chain: UDP-N-acetylmuramoyl-L-alanyl-D-glutamate--2,6-diaminopimelate ligase (480 aa).

Position 21 (serine 21) interacts with UDP-N-acetyl-alpha-D-muramoyl-L-alanyl-D-glutamate. 98 to 104 (GTNGKSS) serves as a coordination point for ATP. UDP-N-acetyl-alpha-D-muramoyl-L-alanyl-D-glutamate is bound by residues 144-145 (TT), serine 171, glutamine 177, and arginine 179. Lysine 211 carries the post-translational modification N6-carboxylysine. Meso-2,6-diaminopimelate-binding positions include arginine 372, 396 to 399 (DNPR), glycine 446, and glutamate 450. A Meso-diaminopimelate recognition motif motif is present at residues 396 to 399 (DNPR).

It belongs to the MurCDEF family. MurE subfamily. Requires Mg(2+) as cofactor. Post-translationally, carboxylation is probably crucial for Mg(2+) binding and, consequently, for the gamma-phosphate positioning of ATP.

The protein localises to the cytoplasm. It carries out the reaction UDP-N-acetyl-alpha-D-muramoyl-L-alanyl-D-glutamate + meso-2,6-diaminopimelate + ATP = UDP-N-acetyl-alpha-D-muramoyl-L-alanyl-gamma-D-glutamyl-meso-2,6-diaminopimelate + ADP + phosphate + H(+). It participates in cell wall biogenesis; peptidoglycan biosynthesis. Catalyzes the addition of meso-diaminopimelic acid to the nucleotide precursor UDP-N-acetylmuramoyl-L-alanyl-D-glutamate (UMAG) in the biosynthesis of bacterial cell-wall peptidoglycan. The polypeptide is UDP-N-acetylmuramoyl-L-alanyl-D-glutamate--2,6-diaminopimelate ligase (Rickettsia prowazekii (strain Madrid E)).